We begin with the raw amino-acid sequence, 234 residues long: LexA repressor (234 aa).

The disordered stretch occupies residues 1 to 29 (MSDAANPEGHKRSLPGRPPGIRADSSGLT). The H-T-H motif DNA-binding region spans 52-72 (MREIGQAVGLSSTSSVAHQLM). Positions 90–109 (YEVRGSDQAASVQPTDTAGK) are disordered. Catalysis depends on for autocatalytic cleavage activity residues S158 and K195.

It belongs to the peptidase S24 family. Homodimer.

It catalyses the reaction Hydrolysis of Ala-|-Gly bond in repressor LexA.. Represses a number of genes involved in the response to DNA damage (SOS response), including recA and lexA. In the presence of single-stranded DNA, RecA interacts with LexA causing an autocatalytic cleavage which disrupts the DNA-binding part of LexA, leading to derepression of the SOS regulon and eventually DNA repair. The chain is LexA repressor from Streptomyces coelicolor (strain ATCC BAA-471 / A3(2) / M145).